The following is a 488-amino-acid chain: L-arabinose isomerase 1 (488 aa).

Mn(2+) is bound by residues E306, E331, H348, and H447.

Belongs to the arabinose isomerase family. Mn(2+) is required as a cofactor.

It catalyses the reaction beta-L-arabinopyranose = L-ribulose. The protein operates within carbohydrate degradation; L-arabinose degradation via L-ribulose; D-xylulose 5-phosphate from L-arabinose (bacterial route): step 1/3. Catalyzes the conversion of L-arabinose to L-ribulose. This Clostridium acetobutylicum (strain ATCC 824 / DSM 792 / JCM 1419 / IAM 19013 / LMG 5710 / NBRC 13948 / NRRL B-527 / VKM B-1787 / 2291 / W) protein is L-arabinose isomerase 1.